A 101-amino-acid chain; its full sequence is Cysteine-rich and transmembrane domain-containing protein B (101 aa).

The interval 1–80 (MSQQPPAVGV…PQQQQQQKHS (80 aa)) is disordered. Residues 24–43 (DAYPPPGQPYPQQGYPPPQG) are compositionally biased toward pro residues. Low complexity predominate over residues 59-77 (YPEQGYPQQGYPPQQQQQQ). Residues 78–95 (KHSPGMLEGCIAALCCYC) traverse the membrane as a helical segment.

The protein belongs to the CYSTM1 family.

It localises to the membrane. The polypeptide is Cysteine-rich and transmembrane domain-containing protein B (Arabidopsis thaliana (Mouse-ear cress)).